Here is a 153-residue protein sequence, read N- to C-terminus: Histone H2B.10 (153 aa).

2 stretches are compositionally biased toward basic and acidic residues: residues Met1–Leu28 and Glu36–Lys53. Residues Met1–Lys61 are disordered. N6-acetyllysine occurs at positions 7 and 37. Residue Lys149 forms a Glycyl lysine isopeptide (Lys-Gly) (interchain with G-Cter in ubiquitin) linkage.

This sequence belongs to the histone H2B family. In terms of assembly, the nucleosome is a histone octamer containing two molecules each of H2A, H2B, H3 and H4 assembled in one H3-H4 heterotetramer and two H2A-H2B heterodimers. The octamer wraps approximately 147 bp of DNA. Post-translationally, can be acetylated to form H2BK6ac and H2BK33ac. Monoubiquitinated by BRE1 to form H2BK143ub1 and deubiquitinated by UBP26. Required for heterochromatic histone H3 di- and trimethylation at H3K4me. May give a specific tag for epigenetic transcriptional activation.

The protein localises to the nucleus. The protein resides in the chromosome. Its function is as follows. Core component of nucleosome. Nucleosomes wrap and compact DNA into chromatin, limiting DNA accessibility to the cellular machineries which require DNA as a template. Histones thereby play a central role in transcription regulation, DNA repair, DNA replication and chromosomal stability. DNA accessibility is regulated via a complex set of post-translational modifications of histones, also called histone code, and nucleosome remodeling. This Oryza sativa subsp. japonica (Rice) protein is Histone H2B.10 (H2B.10).